The primary structure comprises 209 residues: Uracil phosphoribosyltransferase (209 aa).

5-phospho-alpha-D-ribose 1-diphosphate is bound by residues arginine 79, arginine 104, and 131–139 (DPMLATGNS). Uracil contacts are provided by residues isoleucine 194 and 199–201 (GDA). 5-phospho-alpha-D-ribose 1-diphosphate is bound at residue aspartate 200.

It belongs to the UPRTase family. It depends on Mg(2+) as a cofactor.

It carries out the reaction UMP + diphosphate = 5-phospho-alpha-D-ribose 1-diphosphate + uracil. The protein operates within pyrimidine metabolism; UMP biosynthesis via salvage pathway; UMP from uracil: step 1/1. Its activity is regulated as follows. Allosterically activated by GTP. In terms of biological role, catalyzes the conversion of uracil and 5-phospho-alpha-D-ribose 1-diphosphate (PRPP) to UMP and diphosphate. In Variovorax paradoxus (strain S110), this protein is Uracil phosphoribosyltransferase.